We begin with the raw amino-acid sequence, 334 residues long: MPLLLRRFPSPSVVSSFFLRRSMASSTISSDIITPSNTKIGWIGTGVMGRSMCGHLIKAGYTVTVFNRTISKAQTLIDMGANVADSPNSVAEQSDVVFTIVGYPSDVRHVLLDPKSGALSGLRQGGVLVDMTTSEPSLAEEIAKAASFKNCFSIDAPVSGGDLGAKNGKLSIFAGGDETTVKRLDPLFSLMGKVNFMGTSGKGQFAKLANQITIASTMLGLVEGLIYAHKAGLDVKKFLEAISTGAAGSKSIDLYGDRILKRDFDPGFYVNHFVKDLGICLNECQRMGLALPGLALAQQLYLSLKAHGEGDLGTQALLLALERLNNVSVQSSDS.

The transit peptide at 1–23 directs the protein to the mitochondrion; sequence MPLLLRRFPSPSVVSSFFLRRSM. Ala24 bears the N-acetylalanine mark. NAD(+) is bound by residues 38–67 and Thr133; that span reads TKIG…TVFN. Residue Lys207 is part of the active site. Lys275 is a binding site for NAD(+).

This sequence belongs to the HIBADH-related family. 3-hydroxyisobutyrate dehydrogenase subfamily.

Its subcellular location is the mitochondrion. It carries out the reaction 3-hydroxy-2-methylpropanoate + NAD(+) = 2-methyl-3-oxopropanoate + NADH + H(+). It functions in the pathway amino-acid degradation; L-valine degradation. The chain is Probable 3-hydroxyisobutyrate dehydrogenase-like 1, mitochondrial from Arabidopsis thaliana (Mouse-ear cress).